Here is a 174-residue protein sequence, read N- to C-terminus: Achaete-scute homolog 3 (174 aa).

Residues 92–105 are basic motif; sequence AFIRKRNERERQRV. The 53-residue stretch at 92 to 144 folds into the bHLH domain; it reads AFIRKRNERERQRVKCVNEGYARLRRHLPEDYLEKRLSKVETLRAAIKYISYL. Residues 106-144 are helix-loop-helix motif; that stretch reads KCVNEGYARLRRHLPEDYLEKRLSKVETLRAAIKYISYL. Residues 153 to 174 are disordered; it reads SETKKNPRTASCGSLDPALRVI.

In terms of assembly, efficient DNA binding requires dimerization with another bHLH protein. As to expression, expressed in the salivary duct cells. Also expressed at lower levels in testis and epididymis. Expressed in the olfactory epithelium (OE), in a subset of apical microvillar cells.

The protein resides in the nucleus. In terms of biological role, transcriptional repressor. Inhibits myogenesis. Plays a role in progenitor cells which differentiate into ductal and acinar, but not myoepithelial, cell lineages in the salivary glands. Involved in the functions of the microvillar cells and Bowman's glands and probably, in a non-cell-autonomous manner, in the development or regeneration of a complete olfactory epithelium (OE). This is Achaete-scute homolog 3 (Ascl3) from Mus musculus (Mouse).